Reading from the N-terminus, the 126-residue chain is Aspartate 1-decarboxylase (126 aa).

Catalysis depends on Ser25, which acts as the Schiff-base intermediate with substrate; via pyruvic acid. A Pyruvic acid (Ser) modification is found at Ser25. Residue Thr57 coordinates substrate. The active-site Proton donor is the Tyr58. 73–75 (GAA) provides a ligand contact to substrate.

This sequence belongs to the PanD family. In terms of assembly, heterooctamer of four alpha and four beta subunits. Pyruvate is required as a cofactor. Is synthesized initially as an inactive proenzyme, which is activated by self-cleavage at a specific serine bond to produce a beta-subunit with a hydroxyl group at its C-terminus and an alpha-subunit with a pyruvoyl group at its N-terminus.

Its subcellular location is the cytoplasm. The enzyme catalyses L-aspartate + H(+) = beta-alanine + CO2. The protein operates within cofactor biosynthesis; (R)-pantothenate biosynthesis; beta-alanine from L-aspartate: step 1/1. In terms of biological role, catalyzes the pyruvoyl-dependent decarboxylation of aspartate to produce beta-alanine. In Erwinia tasmaniensis (strain DSM 17950 / CFBP 7177 / CIP 109463 / NCPPB 4357 / Et1/99), this protein is Aspartate 1-decarboxylase.